We begin with the raw amino-acid sequence, 192 residues long: Putative integrase/recombinase y4gC (192 aa).

Residues 1-183 (MPSILERDQI…ATEDLRAIAL (183 aa)) form the Tyr recombinase domain. Residues Arg41, Lys66, His135, Arg138, and His161 contribute to the active site. The active-site O-(3'-phospho-DNA)-tyrosine intermediate is the Tyr170.

This sequence belongs to the 'phage' integrase family.

This Sinorhizobium fredii (strain NBRC 101917 / NGR234) protein is Putative integrase/recombinase y4gC.